The following is a 122-amino-acid chain: Large ribosomal subunit protein uL14 (122 aa).

The protein belongs to the universal ribosomal protein uL14 family. Part of the 50S ribosomal subunit. Forms a cluster with proteins L3 and L19. In the 70S ribosome, L14 and L19 interact and together make contacts with the 16S rRNA in bridges B5 and B8.

In terms of biological role, binds to 23S rRNA. Forms part of two intersubunit bridges in the 70S ribosome. In Orientia tsutsugamushi (strain Boryong) (Rickettsia tsutsugamushi), this protein is Large ribosomal subunit protein uL14.